A 341-amino-acid chain; its full sequence is Gibberellin 2-beta-dioxygenase 5 (341 aa).

A Fe2OG dioxygenase domain is found at 187–290 (REETCFLRLN…RFSMAFFLCP (104 aa)). Tyr198 is a 2-oxoglutarate binding site. Fe cation contacts are provided by His213, Asp215, and His271. The 2-oxoglutarate site is built by Arg281 and Ser283.

The protein belongs to the iron/ascorbate-dependent oxidoreductase family. GA2OX subfamily. L-ascorbate serves as cofactor. It depends on Fe(2+) as a cofactor. Expressed in roots, leaves, culms, leaf sheaths and young panicles.

It localises to the cytoplasm. Its subcellular location is the nucleus. The enzyme catalyses gibberellin A1 + 2-oxoglutarate + O2 = gibberellin A8 + succinate + CO2. Its pathway is plant hormone biosynthesis; gibberellin biosynthesis. Catalyzes the 2-beta-hydroxylation of several biologically active gibberellins (GAs), leading to the homeostatic regulation of their endogenous level. Catabolism of GAs plays a central role in plant development. In vitro, converts GA12 and GA53 to the corresponding 2-beta-hydroxylated products GA110 and GA97, respectively. The sequence is that of Gibberellin 2-beta-dioxygenase 5 from Oryza sativa subsp. japonica (Rice).